We begin with the raw amino-acid sequence, 188 residues long: Probable DNA-directed RNA polymerase subunit delta (188 aa).

Residues 14–83 (LSMIEVARAI…GENKWGLRSW (70 aa)) enclose the HTH HARE-type domain. The disordered stretch occupies residues 119-188 (EDAIDYSADD…EDEEDEDEEE (70 aa)).

Belongs to the RpoE family. In terms of assembly, RNAP is composed of a core of 2 alpha, a beta and a beta' subunits. The core is associated with a delta subunit and one of several sigma factors.

In terms of biological role, participates in both the initiation and recycling phases of transcription. In the presence of the delta subunit, RNAP displays an increased specificity of transcription, a decreased affinity for nucleic acids, and an increased efficiency of RNA synthesis because of enhanced recycling. In Streptococcus equi subsp. zooepidemicus (strain H70), this protein is Probable DNA-directed RNA polymerase subunit delta.